A 698-amino-acid chain; its full sequence is Polyphosphate kinase (698 aa).

Asn-63 is a binding site for ATP. Mg(2+) contacts are provided by Arg-390 and Arg-420. Residue His-450 is the Phosphohistidine intermediate of the active site. Positions 483, 579, and 607 each coordinate ATP.

This sequence belongs to the polyphosphate kinase 1 (PPK1) family. Mg(2+) serves as cofactor. In terms of processing, an intermediate of this reaction is the autophosphorylated ppk in which a phosphate is covalently linked to a histidine residue through a N-P bond.

It catalyses the reaction [phosphate](n) + ATP = [phosphate](n+1) + ADP. Functionally, catalyzes the reversible transfer of the terminal phosphate of ATP to form a long-chain polyphosphate (polyP). This chain is Polyphosphate kinase, found in Xylella fastidiosa (strain 9a5c).